Here is a 408-residue protein sequence, read N- to C-terminus: NADH-quinone oxidoreductase subunit D (408 aa).

The protein belongs to the complex I 49 kDa subunit family. As to quaternary structure, NDH-1 is composed of 14 different subunits. Subunits NuoB, C, D, E, F, and G constitute the peripheral sector of the complex.

It localises to the cell inner membrane. The catalysed reaction is a quinone + NADH + 5 H(+)(in) = a quinol + NAD(+) + 4 H(+)(out). Functionally, NDH-1 shuttles electrons from NADH, via FMN and iron-sulfur (Fe-S) centers, to quinones in the respiratory chain. The immediate electron acceptor for the enzyme in this species is believed to be ubiquinone. Couples the redox reaction to proton translocation (for every two electrons transferred, four hydrogen ions are translocated across the cytoplasmic membrane), and thus conserves the redox energy in a proton gradient. The sequence is that of NADH-quinone oxidoreductase subunit D from Campylobacter jejuni subsp. jejuni serotype O:2 (strain ATCC 700819 / NCTC 11168).